The primary structure comprises 545 residues: Chaperonin GroEL (545 aa).

Residues 29–32 (TIGP), 86–90 (DGTTT), Gly-413, 478–480 (NAA), and Asp-494 each bind ATP.

It belongs to the chaperonin (HSP60) family. Forms a cylinder of 14 subunits composed of two heptameric rings stacked back-to-back. Interacts with the co-chaperonin GroES.

The protein resides in the cytoplasm. The catalysed reaction is ATP + H2O + a folded polypeptide = ADP + phosphate + an unfolded polypeptide.. Its function is as follows. Together with its co-chaperonin GroES, plays an essential role in assisting protein folding. The GroEL-GroES system forms a nano-cage that allows encapsulation of the non-native substrate proteins and provides a physical environment optimized to promote and accelerate protein folding. In Exiguobacterium sibiricum (strain DSM 17290 / CCUG 55495 / CIP 109462 / JCM 13490 / 255-15), this protein is Chaperonin GroEL.